The chain runs to 922 residues: Pertactin autotransporter (922 aa).

Residues 1–34 form the signal peptide; that stretch reads MNMSLSRIVKAAPLRRTTLAMALGALGAAPAAYA. The Cell attachment site; involved in adhesion to various eukaryotic cell lines motif lies at 260–262; that stretch reads RGD. 3 tandem repeats follow at residues 266 to 270, 271 to 275, and 276 to 280. The 4 X 5 AA tandem repeats of G-G-A-V-P stretch occupies residues 266-290; the sequence is GGAVPGGAVPGGAVPGGFGPLLDGW. A 4; approximate repeat occupies 281 to 285; the sequence is GGFGP. The interval 561–619 is disordered; the sequence is SLVGAKAPPAPKPAPQPGPQPGPQPPQPPQPPQPPQPPQPPQRQPEAPAPQPPAGRELS. Residues 568 to 613 are compositionally biased toward pro residues; that stretch reads PPAPKPAPQPGPQPGPQPPQPPQPPQPPQPPQPPQRQPEAPAPQPP. Residues 575 to 603 are 9 X 3 AA approximate repeats of P-Q-P; the sequence is PQPGPQPGPQPPQPPQPPQPPQPPQPPQR. Residues 654–922 enclose the Autotransporter domain; the sequence is LNPDAGGAWG…TFHAGYRYSW (269 aa).

Monomer.

The protein localises to the periplasm. It is found in the secreted. Its subcellular location is the cell surface. It localises to the cell outer membrane. Its function is as follows. Agglutinogen that binds to eukaryotic cells; a process mediated by the R-G-D sequence. Pertactin may have a role in bacterial adhesion, and thus play a role in virulence. May contribute to the disease state of whooping cough. In Bordetella parapertussis (strain 12822 / ATCC BAA-587 / NCTC 13253), this protein is Pertactin autotransporter (prn).